Here is a 259-residue protein sequence, read N- to C-terminus: Ribosomal RNA small subunit methyltransferase A (259 aa).

Residues Asn-15, Leu-17, Gly-41, Glu-62, Asp-86, and Asn-105 each contribute to the S-adenosyl-L-methionine site.

It belongs to the class I-like SAM-binding methyltransferase superfamily. rRNA adenine N(6)-methyltransferase family. RsmA subfamily.

The protein localises to the cytoplasm. It carries out the reaction adenosine(1518)/adenosine(1519) in 16S rRNA + 4 S-adenosyl-L-methionine = N(6)-dimethyladenosine(1518)/N(6)-dimethyladenosine(1519) in 16S rRNA + 4 S-adenosyl-L-homocysteine + 4 H(+). Specifically dimethylates two adjacent adenosines (A1518 and A1519) in the loop of a conserved hairpin near the 3'-end of 16S rRNA in the 30S particle. May play a critical role in biogenesis of 30S subunits. The polypeptide is Ribosomal RNA small subunit methyltransferase A (Mycoplasmopsis synoviae (strain 53) (Mycoplasma synoviae)).